Consider the following 144-residue polypeptide: Deoxyuridine 5'-triphosphate nucleotidohydrolase (144 aa).

Residues 63-65 (RSG), Asn-76, and 80-82 (TVD) each bind substrate.

This sequence belongs to the dUTPase family. The cofactor is Mg(2+).

The catalysed reaction is dUTP + H2O = dUMP + diphosphate + H(+). The protein operates within pyrimidine metabolism; dUMP biosynthesis; dUMP from dCTP (dUTP route): step 2/2. Its function is as follows. This enzyme is involved in nucleotide metabolism: it produces dUMP, the immediate precursor of thymidine nucleotides and it decreases the intracellular concentration of dUTP so that uracil cannot be incorporated into DNA. The sequence is that of Deoxyuridine 5'-triphosphate nucleotidohydrolase from Treponema denticola (strain ATCC 35405 / DSM 14222 / CIP 103919 / JCM 8153 / KCTC 15104).